The primary structure comprises 432 residues: C4-dicarboxylate transport protein (432 aa).

8 helical membrane-spanning segments follow: residues 8-28 (ILYV…HYWP), 44-64 (LIKM…IAGM), 78-98 (LLYF…AAHL), 148-168 (GDIL…AVLG), 188-208 (IVHV…AFTI), 222-242 (LIGT…GTIA), 307-327 (IYMT…LTLM), and 355-375 (AATL…ILGI).

The protein belongs to the dicarboxylate/amino acid:cation symporter (DAACS) (TC 2.A.23) family.

The protein localises to the cell inner membrane. Its function is as follows. Responsible for the transport of dicarboxylates such as succinate, fumarate, and malate from the periplasm across the membrane. The chain is C4-dicarboxylate transport protein from Cupriavidus necator (strain ATCC 17699 / DSM 428 / KCTC 22496 / NCIMB 10442 / H16 / Stanier 337) (Ralstonia eutropha).